The chain runs to 379 residues: Succinyl-diaminopimelate desuccinylase (379 aa).

Residue His-68 coordinates Zn(2+). The active site involves Asp-70. Asp-101 provides a ligand contact to Zn(2+). Glu-135 functions as the Proton acceptor in the catalytic mechanism. Zn(2+) is bound by residues Glu-136, Glu-164, and His-350.

This sequence belongs to the peptidase M20A family. DapE subfamily. As to quaternary structure, homodimer. Requires Zn(2+) as cofactor. The cofactor is Co(2+).

It carries out the reaction N-succinyl-(2S,6S)-2,6-diaminopimelate + H2O = (2S,6S)-2,6-diaminopimelate + succinate. It participates in amino-acid biosynthesis; L-lysine biosynthesis via DAP pathway; LL-2,6-diaminopimelate from (S)-tetrahydrodipicolinate (succinylase route): step 3/3. In terms of biological role, catalyzes the hydrolysis of N-succinyl-L,L-diaminopimelic acid (SDAP), forming succinate and LL-2,6-diaminopimelate (DAP), an intermediate involved in the bacterial biosynthesis of lysine and meso-diaminopimelic acid, an essential component of bacterial cell walls. This is Succinyl-diaminopimelate desuccinylase from Bordetella bronchiseptica (strain ATCC BAA-588 / NCTC 13252 / RB50) (Alcaligenes bronchisepticus).